We begin with the raw amino-acid sequence, 135 residues long: Small ribosomal subunit protein uS11 (135 aa).

The protein belongs to the universal ribosomal protein uS11 family. As to quaternary structure, part of the 30S ribosomal subunit. Interacts with proteins S7 and S18. Binds to IF-3.

Located on the platform of the 30S subunit, it bridges several disparate RNA helices of the 16S rRNA. Forms part of the Shine-Dalgarno cleft in the 70S ribosome. The sequence is that of Small ribosomal subunit protein uS11 from Polynucleobacter asymbioticus (strain DSM 18221 / CIP 109841 / QLW-P1DMWA-1) (Polynucleobacter necessarius subsp. asymbioticus).